We begin with the raw amino-acid sequence, 355 residues long: Squamosa promoter-binding protein-like 15 (355 aa).

The disordered stretch occupies residues 1–27; sequence MELLKGSGLNQTESGGSSSTESSSLSG. Residues 12-27 are compositionally biased toward low complexity; sequence TESGGSSSTESSSLSG. The SBP-type zinc-finger motif lies at 61–138; sequence TARCQVEGCR…ACHNERRRKP (78 aa). 8 residues coordinate Zn(2+): Cys-64, Cys-69, Cys-86, His-89, Cys-105, Cys-108, His-112, and Cys-124. The Bipartite nuclear localization signal signature appears at 121–137; that stretch reads KRSCRRRLACHNERRRK.

It localises to the nucleus. In terms of biological role, probable transcription factor required for the flowering response to vernalization in the shoot apical meristem (SAM). Defines the competence of shoot meristems to flower in response to vernalization in perennials. This is Squamosa promoter-binding protein-like 15 from Arabis alpina (Alpine rock-cress).